The following is a 333-amino-acid chain: Protein 2 (333 aa).

Disordered regions lie at residues Met1–Ala41 and Leu57–Thr84. Polar residues predominate over residues Gln24–Ala33. Residues Asp62 to Ala79 show a composition bias toward acidic residues.

This Lactuca sativa (Garden lettuce) protein is Protein 2.